The primary structure comprises 328 residues: Malate dehydrogenase (328 aa).

Gly11–Gly17 is an NAD(+) binding site. 2 residues coordinate substrate: Arg94 and Arg100. NAD(+) is bound by residues Asn107, Gln114, and Val131–Asn133. Positions 133 and 164 each coordinate substrate. Catalysis depends on His189, which acts as the Proton acceptor.

It belongs to the LDH/MDH superfamily. MDH type 2 family.

The enzyme catalyses (S)-malate + NAD(+) = oxaloacetate + NADH + H(+). Catalyzes the reversible oxidation of malate to oxaloacetate. The chain is Malate dehydrogenase from Stenotrophomonas maltophilia (strain K279a).